We begin with the raw amino-acid sequence, 367 residues long: Probable butyrate kinase (367 aa).

It belongs to the acetokinase family.

It localises to the cytoplasm. It catalyses the reaction butanoate + ATP = butanoyl phosphate + ADP. In Bacillus cytotoxicus (strain DSM 22905 / CIP 110041 / 391-98 / NVH 391-98), this protein is Probable butyrate kinase.